Consider the following 354-residue polypeptide: MDENKQKALAAALGQIEKQFGKGSIMRLGDNRAMDVETISTGSLSLDIALGAGGLPMGRIVEIFGPESSGKTTLTLELIAAAQREGKTCAFIDAEHALDPVYAKKLGVNIDELLVSQPDTGEQALEICDALARSGAVDVIVVDSVAALTPKAEIEGEMGDSHMGLQARMLSQAMRKLTGNLKQSNCMCIFINQIRMKIGVMFGNPETTTGGNALKFYASVRLDIRRTGAIKEGEEVVGNETRIKVVKNKIAAPFKEANTQIMYGQGFNREGELIDLGVKHKMVEKSGAWYSYNGDKIGQGKANACKYLKENPEIAKTLDKKLREMLLNPENMQLTGETASAADDVEFGAVPEEF.

Residue 65–72 (GPESSGKT) coordinates ATP.

Belongs to the RecA family.

The protein resides in the cytoplasm. In terms of biological role, can catalyze the hydrolysis of ATP in the presence of single-stranded DNA, the ATP-dependent uptake of single-stranded DNA by duplex DNA, and the ATP-dependent hybridization of homologous single-stranded DNAs. It interacts with LexA causing its activation and leading to its autocatalytic cleavage. This Vibrio cholerae serotype O1 (strain ATCC 39541 / Classical Ogawa 395 / O395) protein is Protein RecA.